Here is a 160-residue protein sequence, read N- to C-terminus: Small ribosomal subunit protein bS6 (160 aa).

Belongs to the bacterial ribosomal protein bS6 family.

Functionally, binds together with bS18 to 16S ribosomal RNA. The protein is Small ribosomal subunit protein bS6 of Ureaplasma urealyticum serovar 10 (strain ATCC 33699 / Western).